A 243-amino-acid polypeptide reads, in one-letter code: ATP synthase subunit b, mitochondrial (243 aa).

Belongs to the eukaryotic ATPase B chain family. In terms of assembly, F-type ATPases have 2 components, CF(1) - the catalytic core - and CF(0) - the membrane proton channel. CF(1) has five subunits: alpha(3), beta(3), gamma(1), delta(1), epsilon(1). CF(0) has three main subunits: a, b and c.

The protein resides in the mitochondrion. Its subcellular location is the mitochondrion inner membrane. Mitochondrial membrane ATP synthase (F(1)F(0) ATP synthase or Complex V) produces ATP from ADP in the presence of a proton gradient across the membrane which is generated by electron transport complexes of the respiratory chain. F-type ATPases consist of two structural domains, F(1) - containing the extramembraneous catalytic core, and F(0) - containing the membrane proton channel, linked together by a central stalk and a peripheral stalk. During catalysis, ATP synthesis in the catalytic domain of F(1) is coupled via a rotary mechanism of the central stalk subunits to proton translocation. Part of the complex F(0) domain and the peripheric stalk, which acts as a stator to hold the catalytic alpha(3)beta(3) subcomplex and subunit a/ATP6 static relative to the rotary elements. This is ATP synthase subunit b, mitochondrial from Drosophila melanogaster (Fruit fly).